Here is a 119-residue protein sequence, read N- to C-terminus: Large ribosomal subunit protein uL18 (119 aa).

It belongs to the universal ribosomal protein uL18 family. In terms of assembly, part of the 50S ribosomal subunit; part of the 5S rRNA/L5/L18/L25 subcomplex. Contacts the 5S and 23S rRNAs.

This is one of the proteins that bind and probably mediate the attachment of the 5S RNA into the large ribosomal subunit, where it forms part of the central protuberance. In Xanthomonas campestris pv. campestris (strain 8004), this protein is Large ribosomal subunit protein uL18.